Consider the following 406-residue polypeptide: DNA primase DnaG (406 aa).

The Toprim domain maps to 167-253; that stretch reads DAVVIVEGRA…CVEDLSRRTV (87 aa). 3 residues coordinate Mg(2+): glutamate 173, aspartate 215, and aspartate 217. The segment at 259–309 is disordered; that stretch reads NKTPASAAAPIATTQSETAATDGSATPAPTPEPAPDTAPSPDSDGDDTEAA. Low complexity predominate over residues 261 to 272; sequence TPASAAAPIATT. Positions 286-296 are enriched in pro residues; the sequence is APTPEPAPDTA.

Belongs to the archaeal DnaG primase family. Forms a ternary complex with MCM helicase and DNA. Requires Mg(2+) as cofactor.

It catalyses the reaction ssDNA + n NTP = ssDNA/pppN(pN)n-1 hybrid + (n-1) diphosphate.. RNA polymerase that catalyzes the synthesis of short RNA molecules used as primers for DNA polymerase during DNA replication. This Halobacterium salinarum (strain ATCC 29341 / DSM 671 / R1) protein is DNA primase DnaG.